Here is a 208-residue protein sequence, read N- to C-terminus: dITP/XTP pyrophosphatase (208 aa).

16–21 (TGNAGK) provides a ligand contact to substrate. Mg(2+) is bound by residues glutamate 46 and aspartate 75. Aspartate 75 acts as the Proton acceptor in catalysis. Residues serine 76, 155–158 (FGYD), lysine 178, and 183–184 (HR) each bind substrate.

Belongs to the HAM1 NTPase family. In terms of assembly, homodimer. It depends on Mg(2+) as a cofactor.

It carries out the reaction XTP + H2O = XMP + diphosphate + H(+). It catalyses the reaction dITP + H2O = dIMP + diphosphate + H(+). The catalysed reaction is ITP + H2O = IMP + diphosphate + H(+). Functionally, pyrophosphatase that catalyzes the hydrolysis of nucleoside triphosphates to their monophosphate derivatives, with a high preference for the non-canonical purine nucleotides XTP (xanthosine triphosphate), dITP (deoxyinosine triphosphate) and ITP. Seems to function as a house-cleaning enzyme that removes non-canonical purine nucleotides from the nucleotide pool, thus preventing their incorporation into DNA/RNA and avoiding chromosomal lesions. The sequence is that of dITP/XTP pyrophosphatase from Deinococcus deserti (strain DSM 17065 / CIP 109153 / LMG 22923 / VCD115).